A 164-amino-acid chain; its full sequence is UPF0304 protein YPDSF_1971 (164 aa).

It belongs to the UPF0304 family.

The chain is UPF0304 protein YPDSF_1971 from Yersinia pestis (strain Pestoides F).